The following is a 279-amino-acid chain: Putative pyruvate, phosphate dikinase regulatory protein (279 aa).

Residue Gly153–Thr160 coordinates ADP.

Belongs to the pyruvate, phosphate/water dikinase regulatory protein family. PDRP subfamily.

It catalyses the reaction N(tele)-phospho-L-histidyl/L-threonyl-[pyruvate, phosphate dikinase] + ADP = N(tele)-phospho-L-histidyl/O-phospho-L-threonyl-[pyruvate, phosphate dikinase] + AMP + H(+). The enzyme catalyses N(tele)-phospho-L-histidyl/O-phospho-L-threonyl-[pyruvate, phosphate dikinase] + phosphate + H(+) = N(tele)-phospho-L-histidyl/L-threonyl-[pyruvate, phosphate dikinase] + diphosphate. In terms of biological role, bifunctional serine/threonine kinase and phosphorylase involved in the regulation of the pyruvate, phosphate dikinase (PPDK) by catalyzing its phosphorylation/dephosphorylation. This Rhodopseudomonas palustris (strain BisA53) protein is Putative pyruvate, phosphate dikinase regulatory protein.